The primary structure comprises 377 residues: Succinyl-diaminopimelate desuccinylase (377 aa).

H67 serves as a coordination point for Zn(2+). The active site involves D69. Zn(2+) is bound at residue D100. E134 functions as the Proton acceptor in the catalytic mechanism. Residues E135, E163, and H349 each coordinate Zn(2+).

This sequence belongs to the peptidase M20A family. DapE subfamily. As to quaternary structure, homodimer. Zn(2+) serves as cofactor. It depends on Co(2+) as a cofactor.

The catalysed reaction is N-succinyl-(2S,6S)-2,6-diaminopimelate + H2O = (2S,6S)-2,6-diaminopimelate + succinate. It functions in the pathway amino-acid biosynthesis; L-lysine biosynthesis via DAP pathway; LL-2,6-diaminopimelate from (S)-tetrahydrodipicolinate (succinylase route): step 3/3. Catalyzes the hydrolysis of N-succinyl-L,L-diaminopimelic acid (SDAP), forming succinate and LL-2,6-diaminopimelate (DAP), an intermediate involved in the bacterial biosynthesis of lysine and meso-diaminopimelic acid, an essential component of bacterial cell walls. The protein is Succinyl-diaminopimelate desuccinylase of Actinobacillus pleuropneumoniae serotype 5b (strain L20).